We begin with the raw amino-acid sequence, 258 residues long: Indole-3-glycerol phosphate synthase (258 aa).

This sequence belongs to the TrpC family.

It catalyses the reaction 1-(2-carboxyphenylamino)-1-deoxy-D-ribulose 5-phosphate + H(+) = (1S,2R)-1-C-(indol-3-yl)glycerol 3-phosphate + CO2 + H2O. It functions in the pathway amino-acid biosynthesis; L-tryptophan biosynthesis; L-tryptophan from chorismate: step 4/5. The protein is Indole-3-glycerol phosphate synthase of Nautilia profundicola (strain ATCC BAA-1463 / DSM 18972 / AmH).